The sequence spans 158 residues: MAEVVEVLVPGGKATAGPPLGPALGPLGINVKAVVDEINAKTASFNGMQVPVKVEVNDKKQFTVTVGIPPTTALIKKEANIEKGSAEPNAKVAGNLPFEAAVRIAKMKLEGMLSYELKTATKEVVGTCVSMGVNVDGKRPKEVLADIAAGKYDSVLLK.

This sequence belongs to the universal ribosomal protein uL11 family. Part of the ribosomal stalk of the 50S ribosomal subunit. Interacts with L10 and the large rRNA to form the base of the stalk. L10 forms an elongated spine to which L12 dimers bind in a sequential fashion forming a multimeric L10(L12)X complex.

Forms part of the ribosomal stalk which helps the ribosome interact with GTP-bound translation factors. The chain is Large ribosomal subunit protein uL11 from Methanoregula boonei (strain DSM 21154 / JCM 14090 / 6A8).